Consider the following 156-residue polypeptide: Phytohormone-binding protein (156 aa).

Residues glutamine 22, glutamine 68, and threonine 141 each coordinate gibberellin A3.

Belongs to the BetVI family.

Binds gibberellin A3 (GA3) in vitro. This is Phytohormone-binding protein from Medicago truncatula (Barrel medic).